Here is a 107-residue protein sequence, read N- to C-terminus: Antimicrobial peptide microplusin (107 aa).

The first 19 residues, 1–19 (MKSLLVCLVLAVVVLVASG), serve as a signal peptide directing secretion. 3 disulfides stabilise this stretch: C25–C60, C38–C88, and C49–C54. The interval 86–107 (TDCDHSHGHEHSHGHEHGHGHH) is disordered. Residues 87-107 (DCDHSHGHEHSHGHEHGHGHH) show a composition bias toward basic and acidic residues.

It localises to the secreted. Has bacteriostatic activity against Gram-positive bacteria, but not against Gram-negative bacteria. Has fungistatic activity against some but not all fungi. Binds and sequesters copper and iron ions. Copper-chelating is crucial for antimicrobial activity against M.luteus. In Ixodes scapularis (Black-legged tick), this protein is Antimicrobial peptide microplusin.